The following is a 244-amino-acid chain: Thiol S-methyltransferase TMT1B (244 aa).

Positions 1 to 23 (MDALVLFLQLLVLLLTLPLHLLA) are cleaved as a signal peptide.

The protein belongs to the methyltransferase superfamily.

Its subcellular location is the endoplasmic reticulum membrane. It localises to the lipid droplet. The protein localises to the microsome. It is found in the cytoplasm. The protein resides in the cytosol. The catalysed reaction is a thiol + S-adenosyl-L-methionine = a methyl thioether + S-adenosyl-L-homocysteine + H(+). Its function is as follows. Thiol S-methyltransferase that catalyzes the transfer of a methyl group from S-adenosyl-L-methionine to alkyl and phenolic thiol-containing acceptor substrates. Together with TMT1B accounts for most of S-thiol methylation activity in the endoplasmic reticulum of hepatocytes. Selectively methylates S-centered nucleophiles from metabolites such as hydrogen sulfide and dithiothreitol. This is Thiol S-methyltransferase TMT1B from Mus musculus (Mouse).